A 190-amino-acid chain; its full sequence is Nodulation protein L (190 aa).

The protein belongs to the transferase hexapeptide repeat family.

Functionally, acetyltransferase implicated in the O-acetylation of Nod factors. In Rhizobium leguminosarum bv. viciae, this protein is Nodulation protein L (nodL).